A 536-amino-acid chain; its full sequence is Beta-hexosaminidase subunit beta (536 aa).

An N-terminal signal peptide occupies residues M1–L31. Residue N63 is glycosylated (N-linked (GlcNAc...) asparagine). A disulfide bridge links C70 with C116. N169 and N306 each carry an N-linked (GlcNAc...) asparagine glycan. 2 disulfide bridges follow: C288–C339 and C513–C530. E334 (proton donor) is an active-site residue.

Belongs to the glycosyl hydrolase 20 family. As to quaternary structure, there are 3 forms of beta-hexosaminidase: hexosaminidase A is a heterodimer composed of one subunit alpha and one subunit beta (chain A and B); hexosaminidase B is a homodimer of two beta subunits (two chains A and B); hexosaminidase S is a homodimer of two alpha subunits. The composition of the dimer (isozyme A versus isozyme S) has a significant effect on the substrate specificity of the alpha subunit active site.

It is found in the lysosome. The protein localises to the cytoplasmic vesicle. The protein resides in the secretory vesicle. It localises to the cortical granule. The enzyme catalyses Hydrolysis of terminal non-reducing N-acetyl-D-hexosamine residues in N-acetyl-beta-D-hexosaminides.. The catalysed reaction is N-acetyl-beta-D-galactosaminyl-(1-&gt;4)-beta-D-3-sulfogalactosyl-(1-&gt;4)-beta-D-glucosyl-(1&lt;-&gt;1')-ceramide + H2O = a beta-D-3-sulfogalactosyl-(1-&gt;4)-beta-D-glucosyl-(1&lt;-&gt;1')-ceramide + N-acetyl-beta-D-galactosamine. It catalyses the reaction a ganglioside GM2 (d18:1(4E)) + H2O = a ganglioside GM3 (d18:1(4E)) + N-acetyl-beta-D-galactosamine. It carries out the reaction a ganglioside GM2 + H2O = a ganglioside GM3 + N-acetyl-beta-D-galactosamine. The enzyme catalyses beta-D-GalNAc-(1-&gt;4)-alpha-L-IdoA-(1-&gt;3)-beta-D-GalNAc-4-sulfate-(1-&gt;4)-alpha-L-IdoA-(1-&gt;3)-D-GalNAc-4-sulfate + H2O = alpha-L-IdoA-(1-&gt;3)-beta-D-GalNAc-4-sulfate-(1-&gt;4)-alpha-L-IdoA-(1-&gt;3)-D-GalNAc-4-sulfate + N-acetyl-D-galactosamine. The catalysed reaction is N-acetyl-beta-D-6-sulfogalactosaminyl-(1-&gt;4)-alpha-L-iduronyl-(1-&gt;3)-N-acetyl-D-6-sulfogalactosamine + H2O = alpha-L-iduronyl-(1-&gt;3)-N-acetyl-D-6-sulfogalactosamine + N-acetyl-D-6-sulfogalactosamine. With respect to regulation, addition of GM2A stimulates the hydrolysis of sulfated glycosphingolipid SM2 and the ganglioside GM2. Functionally, hydrolyzes the non-reducing end N-acetyl-D-hexosamine and/or sulfated N-acetyl-D-hexosamine of glycoconjugates, such as the oligosaccharide moieties from proteins and neutral glycolipids, or from certain mucopolysaccharides. The isozyme B does not hydrolyze each of these substrates, however hydrolyzes efficiently neutral oligosaccharide. Only the isozyme A is responsible for the degradation of GM2 gangliosides in the presence of GM2A. During fertilization is responsible, at least in part, for the zona block to polyspermy. Present in the cortical granules of non-activated oocytes, is exocytosed during the cortical reaction in response to oocyte activation and inactivates the sperm galactosyltransferase-binding site, accounting for the block in sperm binding to the zona pellucida. The chain is Beta-hexosaminidase subunit beta from Mus musculus (Mouse).